A 95-amino-acid polypeptide reads, in one-letter code: Integration host factor subunit beta (95 aa).

The segment at 56-95 is disordered; the sequence is RAPRTGRNPKTGETVELDGKHVPHFKPGKELRDRVNESIA. The span at 72 to 95 shows a compositional bias: basic and acidic residues; sequence LDGKHVPHFKPGKELRDRVNESIA.

Belongs to the bacterial histone-like protein family. As to quaternary structure, heterodimer of an alpha and a beta chain.

In terms of biological role, this protein is one of the two subunits of integration host factor, a specific DNA-binding protein that functions in genetic recombination as well as in transcriptional and translational control. The protein is Integration host factor subunit beta of Pseudoalteromonas translucida (strain TAC 125).